A 473-amino-acid polypeptide reads, in one-letter code: UDP-N-acetylmuramate--L-alanine ligase (473 aa).

112 to 118 (GTHGKTT) is a binding site for ATP.

This sequence belongs to the MurCDEF family.

It is found in the cytoplasm. The catalysed reaction is UDP-N-acetyl-alpha-D-muramate + L-alanine + ATP = UDP-N-acetyl-alpha-D-muramoyl-L-alanine + ADP + phosphate + H(+). It participates in cell wall biogenesis; peptidoglycan biosynthesis. Cell wall formation. This Nitrosomonas eutropha (strain DSM 101675 / C91 / Nm57) protein is UDP-N-acetylmuramate--L-alanine ligase.